The primary structure comprises 174 residues: UBX domain-containing protein 5 (174 aa).

Residues 8–58 (QKEKFAEDRALLSQQNKEYAESLAKDIAKKEEKDKIRFEAEQKELRKKTIQ) are a coiled coil. The UBX domain maps to 74–120 (RLLVRYPNGSRLILSFSPSQPMTSLFDAIILNPACPDYFSVRSVYPR).

In terms of assembly, forms a complex composed of deubiquitinating enzyme atx-3, adapter ubxn-5 and cdc-48.1. Interacts with atx-3 (via C-terminus). Interacts with cdc-48.1 (via N-terminus) and cdc-48.2. Specifically expressed in the germline.

Functionally, probably acts as an adapter for ATPase cdc-48.1 and/or cdc-48.2, conferring substrate specificity. Unlike other UBX domain-containing protein does not bind 'Lys-48'-polyubiquitinated chain. In Caenorhabditis elegans, this protein is UBX domain-containing protein 5.